The sequence spans 502 residues: UDP-N-acetylmuramoylalanine--D-glutamate ligase (502 aa).

129–135 (GTNGKTT) contacts ATP.

Belongs to the MurCDEF family.

Its subcellular location is the cytoplasm. It carries out the reaction UDP-N-acetyl-alpha-D-muramoyl-L-alanine + D-glutamate + ATP = UDP-N-acetyl-alpha-D-muramoyl-L-alanyl-D-glutamate + ADP + phosphate + H(+). Its pathway is cell wall biogenesis; peptidoglycan biosynthesis. Functionally, cell wall formation. Catalyzes the addition of glutamate to the nucleotide precursor UDP-N-acetylmuramoyl-L-alanine (UMA). The polypeptide is UDP-N-acetylmuramoylalanine--D-glutamate ligase (Burkholderia ambifaria (strain MC40-6)).